The following is a 1110-amino-acid chain: Error-prone DNA polymerase (1110 aa).

Residues 1072–1110 are disordered; that stretch reads LGELHEPLNDDRREHPDNPAQRIRHPRDVRILPPSRDFH. 2 stretches are compositionally biased toward basic and acidic residues: residues 1073–1088 and 1097–1110; these read GELH…EHPD and PRDV…RDFH.

Belongs to the DNA polymerase type-C family. DnaE2 subfamily.

The protein localises to the cytoplasm. The catalysed reaction is DNA(n) + a 2'-deoxyribonucleoside 5'-triphosphate = DNA(n+1) + diphosphate. In terms of biological role, DNA polymerase involved in damage-induced mutagenesis and translesion synthesis (TLS). It is not the major replicative DNA polymerase. The sequence is that of Error-prone DNA polymerase from Rhodopseudomonas palustris (strain BisB5).